The chain runs to 145 residues: NADH dehydrogenase [ubiquinone] 1 alpha subcomplex subunit 12 (145 aa).

N-acetylmethionine is present on Met-1.

It belongs to the complex I NDUFA12 subunit family. Complex I is composed of 45 different subunits.

The protein localises to the mitochondrion inner membrane. Accessory subunit of the mitochondrial membrane respiratory chain NADH dehydrogenase (Complex I), that is believed not to be involved in catalysis. Complex I functions in the transfer of electrons from NADH to the respiratory chain. The immediate electron acceptor for the enzyme is believed to be ubiquinone. The sequence is that of NADH dehydrogenase [ubiquinone] 1 alpha subcomplex subunit 12 (NDUFA12) from Bos taurus (Bovine).